The following is a 56-amino-acid chain: Large ribosomal subunit protein bL33 (56 aa).

This sequence belongs to the bacterial ribosomal protein bL33 family.

The polypeptide is Large ribosomal subunit protein bL33 (Actinobacillus succinogenes (strain ATCC 55618 / DSM 22257 / CCUG 43843 / 130Z)).